The following is a 292-amino-acid chain: NAD kinase (292 aa).

Residue Asp-73 is the Proton acceptor of the active site. NAD(+) is bound by residues 73-74, 147-148, His-158, Arg-175, Asp-177, 188-193, and Gln-247; these read DG, NE, and TAYSLS.

This sequence belongs to the NAD kinase family. A divalent metal cation serves as cofactor.

The protein resides in the cytoplasm. The catalysed reaction is NAD(+) + ATP = ADP + NADP(+) + H(+). Involved in the regulation of the intracellular balance of NAD and NADP, and is a key enzyme in the biosynthesis of NADP. Catalyzes specifically the phosphorylation on 2'-hydroxyl of the adenosine moiety of NAD to yield NADP. The protein is NAD kinase of Shigella boydii serotype 4 (strain Sb227).